The sequence spans 410 residues: Structural protein ORF142 (410 aa).

2 disordered regions span residues 1 to 24 (MNQN…HVDT) and 156 to 197 (PTST…VNIS). Residues 161-188 (DDNDNENRSDDDDDDDDYRNDREEVEDS) show a composition bias toward acidic residues.

Its subcellular location is the virion. This is Structural protein ORF142 from Trichoplusia ni ascovirus 2c (TnAV-2c).